Consider the following 399-residue polypeptide: L-2-hydroxyglutarate dehydrogenase (399 aa).

The protein belongs to the L2HGDH family. FAD serves as cofactor.

The catalysed reaction is (S)-2-hydroxyglutarate + A = 2-oxoglutarate + AH2. Catalyzes the dehydrogenation of L-2-hydroxyglutarate (L2HG or(S)-2-hydroxyglutarate) to 2-oxoglutarate (alpha-ketoglutarate). Active in vitro with the artificial electron acceptor 2,6-dichlorophenolindophenol (DCPIP). Also displays a very low oxidase activity in vitro on L-2-hydroxyglutarate with O2 as the electron acceptor, but this activity is most likely not physiological. In Indibacter alkaliphilus (strain CCUG 57479 / KCTC 22604 / LW1), this protein is L-2-hydroxyglutarate dehydrogenase.